The following is a 403-amino-acid chain: Phosphoglycerate kinase (403 aa).

Substrate-binding positions include 22-24 (DFN), R37, 60-63 (HFGR), R119, and R152. ATP-binding positions include K202, E324, and 354-357 (GGDT).

The protein belongs to the phosphoglycerate kinase family. As to quaternary structure, monomer.

It is found in the cytoplasm. The enzyme catalyses (2R)-3-phosphoglycerate + ATP = (2R)-3-phospho-glyceroyl phosphate + ADP. It functions in the pathway carbohydrate degradation; glycolysis; pyruvate from D-glyceraldehyde 3-phosphate: step 2/5. The chain is Phosphoglycerate kinase from Maricaulis maris (strain MCS10) (Caulobacter maris).